The sequence spans 308 residues: rRNA 2'-O-methyltransferase fibrillarin 1 (308 aa).

The segment at 1–68 is disordered; it reads MRPPVTGGRG…PRGGMKGGSK (68 aa). Residues 22-35 show a composition bias toward gly residues; it reads GRGFGGGRSFGGGR. The span at 42-52 shows a compositional bias: basic residues; the sequence is SGPRGRGRGAP. The segment covering 53–65 has biased composition (gly residues); sequence RGRGGPPRGGMKG. S-adenosyl-L-methionine-binding positions include 156-157, 175-176, 200-201, and 220-223; these read TT, EF, DA, and DVAQ.

The protein belongs to the methyltransferase superfamily. Fibrillarin family. Component of box C/D small nucleolar ribonucleoprotein (snoRNP) particles. Interacts with SKP1A. As to expression, expressed in roots, leaves and flowers. Expressed in stems.

It is found in the nucleus. It localises to the nucleolus. The enzyme catalyses a ribonucleotide in rRNA + S-adenosyl-L-methionine = a 2'-O-methylribonucleotide in rRNA + S-adenosyl-L-homocysteine + H(+). It carries out the reaction L-glutaminyl-[histone H2A] + S-adenosyl-L-methionine = N(5)-methyl-L-glutaminyl-[histone H2A] + S-adenosyl-L-homocysteine + H(+). Functionally, S-adenosyl-L-methionine-dependent methyltransferase that has the ability to methylate both RNAs and proteins. Involved in pre-rRNA processing. Utilizes the methyl donor S-adenosyl-L-methionine to catalyze the site-specific 2'-hydroxyl methylation of ribose moieties in pre-ribosomal RNA. Site specificity is provided by a guide RNA that base pairs with the substrate. Methylation occurs at a characteristic distance from the sequence involved in base pairing with the guide RNA. Also acts as a protein methyltransferase by mediating methylation of 'Gln-105' of histone H2A (H2AQ105me), a modification that impairs binding of the FACT complex and is specifically present at 35S ribosomal DNA locus. Binds monophosphate phosphoinositides in vitro. The chain is rRNA 2'-O-methyltransferase fibrillarin 1 from Arabidopsis thaliana (Mouse-ear cress).